The primary structure comprises 56 residues: Large ribosomal subunit protein bL32 (56 aa).

Over residues 1–16 (MAVQKSKKSRSMRGMR) the composition is skewed to basic residues. Positions 1 to 22 (MAVQKSKKSRSMRGMRRSHDAL) are disordered.

It belongs to the bacterial ribosomal protein bL32 family.

In Aliivibrio salmonicida (strain LFI1238) (Vibrio salmonicida (strain LFI1238)), this protein is Large ribosomal subunit protein bL32.